The following is a 258-amino-acid chain: MQEETFYSVRMRASMNGSHEDGGKHISGGERLIPFHEMKRTVNSLLEKGLSHSRGKPDFMQIQFEEVHEPIKTIQPLPVRTNEVSSPEEGQKLARLLLEREGVSREVIEKAYQQIISWSGVRGAVLFDIHSGKRIDQTKGKGVRVSRMDWPDANFEKWALRYHVPAHSRIKEALALASKVSRFPAAVAELCWSDDPDYITGYVAGKKMGYQRITALKEYGSEDGCRIFFIDGSEDVNTYIHDLEKQPILIEWEEDHDS.

This sequence belongs to the BioW family. In terms of assembly, homodimer. Requires Mg(2+) as cofactor.

It carries out the reaction heptanedioate + ATP + CoA = 6-carboxyhexanoyl-CoA + AMP + diphosphate. Its pathway is metabolic intermediate metabolism; pimeloyl-CoA biosynthesis; pimeloyl-CoA from pimelate: step 1/1. Functionally, catalyzes the transformation of pimelate into pimeloyl-CoA with concomitant hydrolysis of ATP to AMP. This is 6-carboxyhexanoate--CoA ligase from Bacillus spizizenii (strain ATCC 23059 / NRRL B-14472 / W23) (Bacillus subtilis subsp. spizizenii).